Reading from the N-terminus, the 458-residue chain is Opine oxidase subunit A (458 aa).

To T-protein and to dimethylglycine dehydrogenase. Heterodimer of a subunit A and a subunit B.

It functions in the pathway opine metabolism; octopine degradation. Its function is as follows. Oxidative cleavage of octopine into L-arginine and pyruvate. This is Opine oxidase subunit A (ooxA) from Rhizobium meliloti (strain 1021) (Ensifer meliloti).